A 507-amino-acid chain; its full sequence is Tryptophan aminotransferase-related protein 2 (507 aa).

The interval 91–135 (PPPHHHHHDAGLATRSSDAAVHRRARTASSMAPSTGKPAVTTDSV) is disordered. Residues Tyr169, 211 to 212 (ST), Asn282, 304 to 307 (DLAY), 327 to 330 (TVSK), and Arg338 contribute to the pyridoxal 5'-phosphate site. Position 330 is an N6-(pyridoxal phosphate)lysine (Lys330).

The protein belongs to the alliinase family. Requires pyridoxal 5'-phosphate as cofactor. In terms of tissue distribution, widely expressed.

The enzyme catalyses L-tryptophan + 2-oxoglutarate = indole-3-pyruvate + L-glutamate. It functions in the pathway plant hormone metabolism; auxin biosynthesis. Functionally, probable tryptophan aminotransferase involved in auxin (IAA) biosynthesis. Required for auxin production to initiate multiple change in growth in response to environmental and developmental cues. Functions upstream of YUCCA1 in auxin biosynthesis. Required for polar auxin transport. In Oryza sativa subsp. japonica (Rice), this protein is Tryptophan aminotransferase-related protein 2.